A 70-amino-acid chain; its full sequence is MKQGIHPNYVEVTATCSCGNVIKTRSTVGKDLNLDVCGNCHPFYTGKQRVVDTGGRVERFNKRFSIPSTK.

Zn(2+)-binding residues include Cys16, Cys18, Cys37, and Cys40.

This sequence belongs to the bacterial ribosomal protein bL31 family. Type A subfamily. In terms of assembly, part of the 50S ribosomal subunit. The cofactor is Zn(2+).

Functionally, binds the 23S rRNA. The sequence is that of Large ribosomal subunit protein bL31 from Pasteurella multocida (strain Pm70).